A 131-amino-acid chain; its full sequence is F(420)H(2) dehydrogenase subunit O (131 aa).

3 residues coordinate [2Fe-2S] cluster: Cys-58, Cys-63, and Cys-66.

This sequence belongs to the FpoO family. In terms of assembly, the FPO complex is composed of at least 13 different subunits. [2Fe-2S] cluster serves as cofactor.

It catalyses the reaction methanophenazine + reduced coenzyme F420-(gamma-L-Glu)(n) = dihydromethanophenazine + oxidized coenzyme F420-(gamma-L-Glu)(n) + H(+). Component of the F(420)H(2) dehydrogenase (FPO complex) which is part of the energy-conserving F(420)H(2):heterodisulfide oxidoreductase system. The membrane-bound electron transfer system of the complex plays an important role in the metabolism of methylotrophic methanogens when the organisms grow on methanol or methylamines. Catalyzes the oxidation of methanophenazine to dihydromethanophenazine. It shuttles electrons from F(420)H(2), via FAD and iron-sulfur (Fe-S) centers, to methanophenazine (an electron carrier in the membrane). It couples the redox reaction to proton translocation (for every two electrons transferred, two hydrogen ions are translocated across the cytoplasmic membrane), and thus conserves the redox energy in a proton gradient. It also catalyzes the oxidation of F(420)H(2) with quinones such as 2,3-dimethyl-1,4-naphthoquinone, 2-methyl-1,4-naphthoquinone and tetramethyl-p-benzoquinone. The sequence is that of F(420)H(2) dehydrogenase subunit O (fpoO) from Methanosarcina mazei (strain ATCC BAA-159 / DSM 3647 / Goe1 / Go1 / JCM 11833 / OCM 88) (Methanosarcina frisia).